The sequence spans 893 residues: MSVTTQQPAVVPLPSSPRLPIESHAGPRSTQLPPSPPETVNGDDPKSITSTPAEPDFPLPPPANPKPQVLDIDKPTPDAHVPRDPRLIRLTGVHPFNTEPPLTDLYNEGFLTSPELFYVRNHGAVPEVQDEECLDWEFSIEGMVANPLKITLRQLLEEYENVTYPVTLVCAGNRRKEQNVVRKSKGFAWGAAGVSTALFTGVVMKDVIERAKPLRKAKYVCMEGADKLPNGYYGTSVKLNWVMDPNRGIMLAHKMNGENLSLDHGKPLRAVVPGQIGGRSVKWLKKLIVTAEPSDNWYHIYDNRVLPTMVDPDEAAKNPKWWMDERYAIYDLSPNSAIAFPAHEEKVVLASAENSYNVRGYAYSGGGRRITRCEVSLNKGKNWRLANIDYAEDKYRDFEGRELFGARLDMDWRETSFCWCFWNLDIATAELRDANDILVRAMDEAMCIQPRDMYWSVLGMMNNPWYRITIHHEGDVLRFEHPTQPALIPGGWMERVKKAGGNLTNGQWGEQIEGQELENTAVEEVKEIKMTKDGVNRIVELDELKWHESAEYPWFVVNDEVYDGTSFLEGHPGGAQSIISAAGLDASDEFMAIHSETAKAMMPAYHIGTLSPTASKQLSLEEPTSKQASSSSLRPTFLDSRTWSKALLSSKTKVSWDTRIFRFKLDHASQTLGLPTGQHLMIRLRDPVTREAIIRSYTPISQISEQGFCDVLIKIYADAPGREGGKMTKALDSIPCGHWVDMKGPIGKFEYLGKGVCSINGNERRVRSMKMICGGSGITPIYQVLRAILQDSADSTHCTVLNGNRLEEDILCREDLDRFAEENGERCTLVHTLTQAAEGWTGRRGRIGEELLKEFCGTEEDGLVLVCGPEGLERSVKGLLSGMAWRDDDVIFF.

Positions 1–83 (MSVTTQQPAV…KPTPDAHVPR (83 aa)) are disordered. Positions 55-65 (PDFPLPPPANP) are enriched in pro residues. A compositionally biased stretch (basic and acidic residues) spans 71-83 (DIDKPTPDAHVPR). A Mo-molybdopterin-binding site is contributed by cysteine 170. Positions 536–611 (NRIVELDELK…MPAYHIGTLS (76 aa)) constitute a Cytochrome b5 heme-binding domain. Residues histidine 571 and histidine 594 each contribute to the heme site. Positions 641 to 752 (RTWSKALLSS…KGPIGKFEYL (112 aa)) constitute an FAD-binding FR-type domain. FAD is bound by residues 695–698 (RSYT), 712–716 (LIKIY), 726–728 (KMT), serine 776, and threonine 779. Residue 863 to 872 (LVLVCGPEGL) coordinates NADP(+).

It belongs to the nitrate reductase family. In terms of assembly, homodimer. It depends on FAD as a cofactor. Heme serves as cofactor. The cofactor is Mo-molybdopterin.

The catalysed reaction is nitrite + NADP(+) + H2O = nitrate + NADPH + H(+). Its function is as follows. Nitrate reductase is a key enzyme involved in the first step of nitrate assimilation in plants, fungi and bacteria. This chain is Nitrate reductase [NADPH] (NIAD), found in Leptosphaeria maculans (Blackleg fungus).